Here is a 134-residue protein sequence, read N- to C-terminus: ATP synthase epsilon chain (134 aa).

This sequence belongs to the ATPase epsilon chain family. As to quaternary structure, F-type ATPases have 2 components, CF(1) - the catalytic core - and CF(0) - the membrane proton channel. CF(1) has five subunits: alpha(3), beta(3), gamma(1), delta(1), epsilon(1). CF(0) has three main subunits: a, b and c.

It is found in the cell inner membrane. Functionally, produces ATP from ADP in the presence of a proton gradient across the membrane. The protein is ATP synthase epsilon chain of Solibacter usitatus (strain Ellin6076).